A 682-amino-acid chain; its full sequence is Methionine--tRNA ligase (682 aa).

The short motif at 15-25 is the 'HIGH' region element; sequence PYANGAIHLGH. Residues cysteine 146, cysteine 149, cysteine 159, and cysteine 162 each coordinate Zn(2+). The short motif at 331-335 is the 'KMSKS' region element; that stretch reads KMSKS. Lysine 334 is an ATP binding site. The region spanning 580 to 682 is the tRNA-binding domain; sequence DFAKLDMRVA…NGVTAGMQVK (103 aa).

It belongs to the class-I aminoacyl-tRNA synthetase family. MetG type 1 subfamily. In terms of assembly, homodimer. It depends on Zn(2+) as a cofactor.

Its subcellular location is the cytoplasm. It catalyses the reaction tRNA(Met) + L-methionine + ATP = L-methionyl-tRNA(Met) + AMP + diphosphate. Functionally, is required not only for elongation of protein synthesis but also for the initiation of all mRNA translation through initiator tRNA(fMet) aminoacylation. This chain is Methionine--tRNA ligase, found in Haemophilus influenzae (strain PittGG).